The following is a 480-amino-acid chain: Histone deacetylase 1 (480 aa).

The interval 9–321 (RKVCYYYDGD…WTYETAVALD (313 aa)) is histone deacetylase. Residues glycine 27 and lysine 31 each coordinate 1D-myo-inositol 1,4,5,6-tetrakisphosphate. Histidine 141 is a catalytic residue. Residues aspartate 176, histidine 178, and aspartate 264 each coordinate Zn(2+). Arginine 270 contacts 1D-myo-inositol 1,4,5,6-tetrakisphosphate. Residues 376 to 480 (APGVQMQPIP…KGVKEETKST (105 aa)) form a disordered region. A compositionally biased stretch (acidic residues) spans 388–400 (AVQEDSGDEEEED). Positions 401 to 416 (PEKRISIRNSDKRISC) are enriched in basic and acidic residues. Over residues 417 to 427 (DEEFSDSEDEG) the composition is skewed to acidic residues. Positions 455 to 480 (KDEKEEEKAKEEKAEPKGVKEETKST) are enriched in basic and acidic residues.

Belongs to the histone deacetylase family. HD type 1 subfamily. Requires Zn(2+) as cofactor.

The protein localises to the nucleus. It catalyses the reaction N(6)-acetyl-L-lysyl-[histone] + H2O = L-lysyl-[histone] + acetate. The enzyme catalyses N(6)-acetyl-L-lysyl-[protein] + H2O = L-lysyl-[protein] + acetate. It carries out the reaction N(6)-(2E)-butenoyl-L-lysyl-[protein] + H2O = (2E)-2-butenoate + L-lysyl-[protein]. The catalysed reaction is N(6)-[(S)-lactoyl]-L-lysyl-[protein] + H2O = (S)-lactate + L-lysyl-[protein]. Inositol tetraphosphate (1D-myo-inositol 1,4,5,6-tetrakisphosphate) may act as an intermolecular glue between HDAC1 and N-Cor repressor complex components. Functionally, histone deacetylase that catalyzes the deacetylation of lysine residues on the N-terminal part of the core histones (H2A, H2B, H3 and H4). Histone deacetylation gives a tag for epigenetic repression and plays an important role in transcriptional regulation, cell cycle progression and developmental events. Histone deacetylases act via the formation of large multiprotein complexes. Also functions as a deacetylase for non-histone proteins. In addition to protein deacetylase activity, also has protein-lysine deacylase activity: acts as a protein decrotonylase and delactylase by mediating decrotonylation ((2E)-butenoyl) and delactylation (lactoyl) of histones, respectively. The chain is Histone deacetylase 1 (HDAC1) from Gallus gallus (Chicken).